The following is a 94-amino-acid chain: MALSPEEVNHVAMLARLALSEDEKTAFAEQLTLILDYVERLNELDTGEVEPLIHILPVFNVLRQDEALPGSSQEEILSNAPLVEDGQYKVPRII.

It belongs to the GatC family. As to quaternary structure, heterotrimer of A, B and C subunits.

The catalysed reaction is L-glutamyl-tRNA(Gln) + L-glutamine + ATP + H2O = L-glutaminyl-tRNA(Gln) + L-glutamate + ADP + phosphate + H(+). The enzyme catalyses L-aspartyl-tRNA(Asn) + L-glutamine + ATP + H2O = L-asparaginyl-tRNA(Asn) + L-glutamate + ADP + phosphate + 2 H(+). In terms of biological role, allows the formation of correctly charged Asn-tRNA(Asn) or Gln-tRNA(Gln) through the transamidation of misacylated Asp-tRNA(Asn) or Glu-tRNA(Gln) in organisms which lack either or both of asparaginyl-tRNA or glutaminyl-tRNA synthetases. The reaction takes place in the presence of glutamine and ATP through an activated phospho-Asp-tRNA(Asn) or phospho-Glu-tRNA(Gln). The chain is Aspartyl/glutamyl-tRNA(Asn/Gln) amidotransferase subunit C from Syntrophomonas wolfei subsp. wolfei (strain DSM 2245B / Goettingen).